A 37-amino-acid chain; its full sequence is Large ribosomal subunit protein bL36 (37 aa).

The protein belongs to the bacterial ribosomal protein bL36 family.

The polypeptide is Large ribosomal subunit protein bL36 (rpmJ) (Geobacillus stearothermophilus (Bacillus stearothermophilus)).